The primary structure comprises 44 residues: Photosystem I reaction center subunit IX (44 aa).

Residues 7–27 (YLSVAPVLSTLSLGFLTGFLI) form a helical membrane-spanning segment.

Belongs to the PsaJ family.

The protein resides in the plastid membrane. May help in the organization of the PsaE and PsaF subunits. This is Photosystem I reaction center subunit IX from Cuscuta gronovii (Common dodder).